Here is a 457-residue protein sequence, read N- to C-terminus: tRNA modification GTPase MnmE (457 aa).

The (6S)-5-formyl-5,6,7,8-tetrahydrofolate site is built by arginine 23, glutamate 85, and arginine 124. Residues 220–376 (GALVVLAGQV…LVTAIRAAVL (157 aa)) enclose the TrmE-type G domain. Asparagine 230 serves as a coordination point for K(+). GTP-binding positions include 230–235 (NAGKSS), 249–255 (TDLPGTT), and 274–277 (DTAG). Serine 234 contacts Mg(2+). K(+) is bound by residues threonine 249, leucine 251, and threonine 254. Residue threonine 255 coordinates Mg(2+). Lysine 457 serves as a coordination point for (6S)-5-formyl-5,6,7,8-tetrahydrofolate.

It belongs to the TRAFAC class TrmE-Era-EngA-EngB-Septin-like GTPase superfamily. TrmE GTPase family. Homodimer. Heterotetramer of two MnmE and two MnmG subunits. K(+) is required as a cofactor.

It is found in the cytoplasm. Exhibits a very high intrinsic GTPase hydrolysis rate. Involved in the addition of a carboxymethylaminomethyl (cmnm) group at the wobble position (U34) of certain tRNAs, forming tRNA-cmnm(5)s(2)U34. In Nitratidesulfovibrio vulgaris (strain DP4) (Desulfovibrio vulgaris), this protein is tRNA modification GTPase MnmE.